A 458-amino-acid polypeptide reads, in one-letter code: Exodeoxyribonuclease 7 large subunit (458 aa).

This sequence belongs to the XseA family. In terms of assembly, heterooligomer composed of large and small subunits.

The protein resides in the cytoplasm. The catalysed reaction is Exonucleolytic cleavage in either 5'- to 3'- or 3'- to 5'-direction to yield nucleoside 5'-phosphates.. Bidirectionally degrades single-stranded DNA into large acid-insoluble oligonucleotides, which are then degraded further into small acid-soluble oligonucleotides. This Serratia proteamaculans (strain 568) protein is Exodeoxyribonuclease 7 large subunit.